A 741-amino-acid polypeptide reads, in one-letter code: Cysteine--tRNA ligase, cytoplasmic (741 aa).

Residue C46 participates in Zn(2+) binding. A 'HIGH' region motif is present at residues 48-58 (PTVYDASHMGH). S297 carries the phosphoserine modification. C340, H365, and E369 together coordinate Zn(2+). The 'KMSKS' region motif lies at 398-402 (KMSKS). K401 contributes to the ATP binding site. A disordered region spans residues 697-718 (FDENGLPTHDKEGKEVSKGQIK). The segment covering 704-713 (THDKEGKEVS) has biased composition (basic and acidic residues).

It belongs to the class-I aminoacyl-tRNA synthetase family. Zn(2+) is required as a cofactor.

It localises to the cytoplasm. It catalyses the reaction tRNA(Cys) + L-cysteine + ATP = L-cysteinyl-tRNA(Cys) + AMP + diphosphate. The sequence is that of Cysteine--tRNA ligase, cytoplasmic from Drosophila melanogaster (Fruit fly).